The primary structure comprises 235 residues: 2-C-methyl-D-erythritol 4-phosphate cytidylyltransferase (235 aa).

This sequence belongs to the IspD/TarI cytidylyltransferase family. IspD subfamily.

The catalysed reaction is 2-C-methyl-D-erythritol 4-phosphate + CTP + H(+) = 4-CDP-2-C-methyl-D-erythritol + diphosphate. The protein operates within isoprenoid biosynthesis; isopentenyl diphosphate biosynthesis via DXP pathway; isopentenyl diphosphate from 1-deoxy-D-xylulose 5-phosphate: step 2/6. Its function is as follows. Catalyzes the formation of 4-diphosphocytidyl-2-C-methyl-D-erythritol from CTP and 2-C-methyl-D-erythritol 4-phosphate (MEP). In Pseudomonas putida (strain W619), this protein is 2-C-methyl-D-erythritol 4-phosphate cytidylyltransferase.